Here is a 530-residue protein sequence, read N- to C-terminus: Capsid protein VP1 (530 aa).

The segment at 1 to 20 (MMMASKDATSSVDGASGAGQ) is disordered. Residues 1-225 (MMMASKDATS…FLFLVPPTVE (225 aa)) are shell domain. The interval 226 to 278 (QKTRPFTLPNLPLSSLSNSRAPLPISSMGISPDNVQSVQFQNGRCTLDGRLVG) is P1 sub-domain 1. Residues 226-530 (QKTRPFTLPN…SARGRLGLRR (305 aa)) are protruding domain. Positions 279–405 (TTPVSLSHVA…GSSITEATHL (127 aa)) are P2 sub-domain. The interval 406 to 530 (APSVYPPGFG…SARGRLGLRR (125 aa)) is P1 sub-domain 2. The segment at 523 to 530 (RGRLGLRR) is plays a role in binding to host histo-blood group structures antigens and in the formation of P-particles.

It belongs to the caliciviridae capsid protein family. As to quaternary structure, homodimer. Homomultimer. Interacts with the minor capsid protein VP2. Interacts (via C-terminus) with host type I histo-blood group structures antigens at the surface of target cells. In terms of processing, may be cleaved by host protease to generate soluble capsid protein. Assembled capsid cannot be cleaved.

It is found in the virion. The protein localises to the host cytoplasm. In terms of biological role, capsid protein self assembles to form an icosahedral capsid with a T=3 symmetry, about 38 nm in diameter, and consisting of 180 capsid proteins. A smaller form of capsid with a diameter of 23 nm might be capsid proteins assembled as icosahedron with T=1 symmetry. The capsid encapsulates the genomic RNA and is decorated with VP2 proteins. Attaches virion to target cells by binding histo-blood group antigens (HBGAs) present on gastroduodenal epithelial cells. The soluble capsid protein may play a role in viral immunoevasion. The chain is Capsid protein VP1 from Norovirus (strain Human/NoV/United States/Norwalk/1968/GI) (Hu/NV/NV/1968/US).